Reading from the N-terminus, the 218-residue chain is Glycoprotein UL1 (218 aa).

Residues 1–27 (MGVQCNSKLLLLAVLITIILSSILVQA) form the signal peptide. Residues 178–198 (VATHVGWTATVVIIICVLTYV) form a helical membrane-spanning segment.

Belongs to the RL11 family.

The protein localises to the virion membrane. The chain is Glycoprotein UL1 (UL1) from Homo sapiens (Human).